We begin with the raw amino-acid sequence, 151 residues long: Large ribosomal subunit protein bL9 (151 aa).

The protein belongs to the bacterial ribosomal protein bL9 family.

Functionally, binds to the 23S rRNA. The chain is Large ribosomal subunit protein bL9 from Pelodictyon phaeoclathratiforme (strain DSM 5477 / BU-1).